The primary structure comprises 204 residues: Paraneoplastic antigen-like protein 8C (204 aa).

Residues 135–204 (PPATGPRELP…RRHHASDKKL (70 aa)) form a disordered region. Residues 182 to 204 (VGKRGKRKNKKNRRRHHASDKKL) show a composition bias toward basic residues.

This sequence belongs to the PNMA family.

This is Paraneoplastic antigen-like protein 8C from Homo sapiens (Human).